The following is a 278-amino-acid chain: Biotin synthase (278 aa).

The Radical SAM core domain maps to 1–227 (MQIMLCAISN…QSVVMVAGGR (227 aa)). Residues cysteine 16, cysteine 20, and cysteine 23 each contribute to the [4Fe-4S] cluster site. [2Fe-2S] cluster-binding residues include cysteine 60, cysteine 95, and cysteine 153.

This sequence belongs to the radical SAM superfamily. Biotin synthase family. As to quaternary structure, homodimer. The cofactor is [4Fe-4S] cluster. It depends on [2Fe-2S] cluster as a cofactor.

It catalyses the reaction (4R,5S)-dethiobiotin + (sulfur carrier)-SH + 2 reduced [2Fe-2S]-[ferredoxin] + 2 S-adenosyl-L-methionine = (sulfur carrier)-H + biotin + 2 5'-deoxyadenosine + 2 L-methionine + 2 oxidized [2Fe-2S]-[ferredoxin]. It participates in cofactor biosynthesis; biotin biosynthesis; biotin from 7,8-diaminononanoate: step 2/2. Functionally, catalyzes the conversion of dethiobiotin (DTB) to biotin by the insertion of a sulfur atom into dethiobiotin via a radical-based mechanism. This Campylobacter jejuni subsp. jejuni serotype O:23/36 (strain 81-176) protein is Biotin synthase.